Here is an 821-residue protein sequence, read N- to C-terminus: Xylosyltransferase 1 (821 aa).

The tract at residues 1–121 (YFSHRPKEKV…PETKSDQVPK (121 aa)) is disordered. Residues 1–821 (YFSHRPKEKV…GAVKPDGRLR (821 aa)) lie on the Lumenal side of the membrane. The segment covering 9-25 (KVRTDSNNENSVPKDFE) has biased composition (basic and acidic residues). A compositionally biased stretch (polar residues) spans 27 to 36 (VDNSNFAPRT). Basic and acidic residues-rich tracts occupy residues 41 to 58 (HQPE…ERLQ) and 76 to 87 (GPKEVLPPREKA). Residue Asn-90 is glycosylated (N-linked (GlcNAc...) asparagine). 4 disulfide bridges follow: Cys-122-Cys-150, Cys-166-Cys-407, Cys-426-Cys-439, and Cys-428-Cys-437. Residues Val-198, Asp-226, and 255 to 257 (TIW) each bind UDP-alpha-D-xylose. Asn-286 carries an N-linked (GlcNAc...) asparagine glycan. 359–360 (DW) provides a ligand contact to UDP-alpha-D-xylose. UDP-alpha-D-xylose is bound by residues Ser-440 and 463-464 (RK). Intrachain disulfides connect Cys-540–Cys-789 and Cys-782–Cys-795. Asn-642 is a glycosylation site (N-linked (GlcNAc...) asparagine). The segment at 801-821 (SSFSPDPKSELGAVKPDGRLR) is disordered.

The protein belongs to the glycosyltransferase 14 family. XylT subfamily. In terms of assembly, monomer. The cofactor is a divalent metal cation. Contains 7 disulfide bonds. In terms of processing, N-glycosylated.

The protein resides in the golgi apparatus membrane. It catalyses the reaction UDP-alpha-D-xylose + L-seryl-[protein] = 3-O-(beta-D-xylosyl)-L-seryl-[protein] + UDP + H(+). Its pathway is glycan metabolism; chondroitin sulfate biosynthesis. It participates in glycan metabolism; heparan sulfate biosynthesis. Its function is as follows. Catalyzes the first step in the biosynthesis of chondroitin sulfate and dermatan sulfate proteoglycans, such as DCN. Transfers D-xylose from UDP-D-xylose to specific serine residues of the core protein. Required for normal maturation of chondrocytes during bone development, normal onset of ossification and normal embryonic and postnatal skeleton development, especially of the long bones. This Rattus norvegicus (Rat) protein is Xylosyltransferase 1 (Xylt1).